Reading from the N-terminus, the 104-residue chain is L-rhamnose mutarotase (104 aa).

Residue Tyr-18 participates in substrate binding. His-22 serves as the catalytic Proton donor. Substrate is bound by residues Tyr-41 and 76–77 (WW).

It belongs to the rhamnose mutarotase family. Homodimer.

The protein resides in the cytoplasm. The enzyme catalyses alpha-L-rhamnose = beta-L-rhamnose. The protein operates within carbohydrate metabolism; L-rhamnose metabolism. In terms of biological role, involved in the anomeric conversion of L-rhamnose. The polypeptide is L-rhamnose mutarotase (Mannheimia succiniciproducens (strain KCTC 0769BP / MBEL55E)).